The primary structure comprises 272 residues: Flt3 receptor-interacting lectin (272 aa).

Positions 1 to 8 (MFPSKVKS) are cleaved as a signal peptide. Alpha-D-mannopyranose contacts are provided by aspartate 94 and glycine 112. 2 N-linked (GlcNAc...) asparagine glycosylation sites follow: asparagine 125 and asparagine 131. Alpha-D-mannopyranose is bound by residues asparagine 152 and 237–238 (QD).

The protein belongs to the leguminous lectin family. Dimer (alpha/beta)2. Tetramer (alpha/beta)4. Glycosylated at Asn-125 by either a paucimannose type N-glycan (alpha-4) or a single N-acetylglucosamine (alpha-3). Glycosylated at Asn-131 by a paucimannose type N-glycan (alpha-2, alpha-3 and alpha-4). In alpha-2, Asn-125 is deamidated to an Asp, possibly due to the action of intrinsic peptide N-glycosidase (PGNase).

Its subcellular location is the protein storage vacuole lumen. Its function is as follows. Mannose-binding lectin. Accommodates most effectively a non-reducing terminal alpha-d-mannosyl unit. Strongly precipitates murine IgM but not IgG. The sequence is that of Flt3 receptor-interacting lectin from Lablab purpureus (Hyacinth bean).